Here is a 448-residue protein sequence, read N- to C-terminus: Inositol hexakisphosphate kinase 2 (448 aa).

Residues Glu229 to Leu231 and Asp242 contribute to the ATP site. Substrate is bound by residues Pro238–Gly246, Lys244, and Lys258–Lys265. Asp405 is an ATP binding site. His408 serves as a coordination point for substrate.

The protein belongs to the inositol phosphokinase (IPK) family. In terms of tissue distribution, highly expressed in brain and lung, and at slightly lower levels in liver, kidney and testis.

The protein resides in the nucleus. The catalysed reaction is 1D-myo-inositol hexakisphosphate + ATP = 5-diphospho-1D-myo-inositol 1,2,3,4,6-pentakisphosphate + ADP. The protein operates within phospholipid metabolism; phosphatidylinositol metabolism. Its function is as follows. Converts inositol hexakisphosphate (InsP6) to diphosphoinositol pentakisphosphate (InsP7/PP-InsP5). May play a role in the regulation of Na(+)-dependent phosphate cotransport, possibly via its role in diphosphoinositol pentakisphosphate (InsP7/PP-InsP5) biosynthesis. The protein is Inositol hexakisphosphate kinase 2 (Ip6k2) of Mus musculus (Mouse).